Here is a 349-residue protein sequence, read N- to C-terminus: Hydroxymethylglutaryl-CoA synthase (349 aa).

2 residues coordinate (3S)-3-hydroxy-3-methylglutaryl-CoA: Asp-30 and Ala-31. Glu-82 serves as the catalytic Proton donor/acceptor. Residues Cys-114 and Thr-155 each coordinate (3S)-3-hydroxy-3-methylglutaryl-CoA. The active-site Acyl-thioester intermediate is the Cys-114. Arg-203 serves as a coordination point for CoA. (3S)-3-hydroxy-3-methylglutaryl-CoA is bound by residues Thr-205 and His-238. The active-site Proton donor/acceptor is His-238. Lys-243 contributes to the CoA binding site. Residues Asn-270 and Ser-300 each contribute to the (3S)-3-hydroxy-3-methylglutaryl-CoA site.

This sequence belongs to the thiolase-like superfamily. Archaeal HMG-CoA synthase family. As to quaternary structure, interacts with acetoacetyl-CoA thiolase that catalyzes the precedent step in the pathway and with a DUF35 protein. The acetoacetyl-CoA thiolase/HMG-CoA synthase complex channels the intermediate via a fused CoA-binding site, which allows for efficient coupling of the endergonic thiolase reaction with the exergonic HMGCS reaction.

The enzyme catalyses acetoacetyl-CoA + acetyl-CoA + H2O = (3S)-3-hydroxy-3-methylglutaryl-CoA + CoA + H(+). It functions in the pathway metabolic intermediate biosynthesis; (R)-mevalonate biosynthesis; (R)-mevalonate from acetyl-CoA: step 2/3. Its function is as follows. Catalyzes the condensation of acetyl-CoA with acetoacetyl-CoA to form 3-hydroxy-3-methylglutaryl-CoA (HMG-CoA). Functions in the mevalonate (MVA) pathway leading to isopentenyl diphosphate (IPP), a key precursor for the biosynthesis of isoprenoid compounds that are building blocks of archaeal membrane lipids. This is Hydroxymethylglutaryl-CoA synthase from Methanococcus vannielii (strain ATCC 35089 / DSM 1224 / JCM 13029 / OCM 148 / SB).